The following is a 78-amino-acid chain: Small ribosomal subunit protein bS18 (78 aa).

Belongs to the bacterial ribosomal protein bS18 family. As to quaternary structure, part of the 30S ribosomal subunit. Forms a tight heterodimer with protein bS6.

In terms of biological role, binds as a heterodimer with protein bS6 to the central domain of the 16S rRNA, where it helps stabilize the platform of the 30S subunit. The protein is Small ribosomal subunit protein bS18 of Nocardioides sp. (strain ATCC BAA-499 / JS614).